Reading from the N-terminus, the 224-residue chain is Ribonuclease HII (224 aa).

In terms of domain architecture, RNase H type-2 spans 1–210; sequence MKVAGADEAG…AKKIEEKFKR (210 aa). The a divalent metal cation site is built by aspartate 7, glutamate 8, and aspartate 105.

The protein belongs to the RNase HII family. Mn(2+) is required as a cofactor. Requires Mg(2+) as cofactor.

It localises to the cytoplasm. It catalyses the reaction Endonucleolytic cleavage to 5'-phosphomonoester.. Its function is as follows. Endonuclease that specifically degrades the RNA of RNA-DNA hybrids. This Pyrococcus abyssi (strain GE5 / Orsay) protein is Ribonuclease HII (rnhB).